The sequence spans 290 residues: Pyridoxal kinase PdxY (290 aa).

Residues Ser12 and 47 to 48 (TQ) contribute to the substrate site. ATP-binding positions include Asp114, Glu151, Lys184, and 211 to 214 (RPLL). Asp225 lines the substrate pocket.

It belongs to the pyridoxine kinase family. PdxY subfamily. In terms of assembly, homodimer. It depends on Mg(2+) as a cofactor.

It catalyses the reaction pyridoxal + ATP = pyridoxal 5'-phosphate + ADP + H(+). It functions in the pathway cofactor metabolism; pyridoxal 5'-phosphate salvage; pyridoxal 5'-phosphate from pyridoxal: step 1/1. Its function is as follows. Pyridoxal kinase involved in the salvage pathway of pyridoxal 5'-phosphate (PLP). Catalyzes the phosphorylation of pyridoxal to PLP. This Pseudomonas fluorescens (strain ATCC BAA-477 / NRRL B-23932 / Pf-5) protein is Pyridoxal kinase PdxY.